The following is a 186-amino-acid chain: NADH-quinone oxidoreductase subunit B 2 (186 aa).

Residues 1–27 (MPSFTQPHSAPRNFQFPGQQRQGDPTM) form a disordered region. 4 residues coordinate [4Fe-4S] cluster: Cys65, Cys66, Cys130, and Cys160.

Belongs to the complex I 20 kDa subunit family. In terms of assembly, NDH-1 is composed of 14 different subunits. Subunits NuoB, C, D, E, F, and G constitute the peripheral sector of the complex. Requires [4Fe-4S] cluster as cofactor.

The protein localises to the cell inner membrane. It catalyses the reaction a quinone + NADH + 5 H(+)(in) = a quinol + NAD(+) + 4 H(+)(out). Its function is as follows. NDH-1 shuttles electrons from NADH, via FMN and iron-sulfur (Fe-S) centers, to quinones in the respiratory chain. The immediate electron acceptor for the enzyme in this species is believed to be ubiquinone. Couples the redox reaction to proton translocation (for every two electrons transferred, four hydrogen ions are translocated across the cytoplasmic membrane), and thus conserves the redox energy in a proton gradient. This Rhizobium etli (strain ATCC 51251 / DSM 11541 / JCM 21823 / NBRC 15573 / CFN 42) protein is NADH-quinone oxidoreductase subunit B 2.